The sequence spans 125 residues: Lectin (125 aa).

The C-type lectin domain maps to 1–120 (MDYEILFSDE…CGGARRVICE (120 aa)). 2 disulfides stabilise this stretch: cysteine 21–cysteine 119 and cysteine 96–cysteine 111.

As to quaternary structure, homodimer.

Functionally, role in the defense system of the organism against microorganisms. This calcium-binding lectin binds galactose. This is Lectin from Polyandrocarpa misakiensis (Tunicate).